Reading from the N-terminus, the 246-residue chain is Ribonuclease 3 (246 aa).

An RNase III domain is found at Phe-18–Gly-147. Glu-60 contacts Mg(2+). Asp-64 is an active-site residue. Residues Asp-133 and Glu-136 each coordinate Mg(2+). Glu-136 is a catalytic residue. The DRBM domain maps to Asp-173–Thr-242.

Belongs to the ribonuclease III family. As to quaternary structure, homodimer. Mg(2+) is required as a cofactor.

Its subcellular location is the cytoplasm. It carries out the reaction Endonucleolytic cleavage to 5'-phosphomonoester.. Functionally, digests double-stranded RNA. Involved in the processing of primary rRNA transcript to yield the immediate precursors to the large and small rRNAs (23S and 16S). Processes some mRNAs, and tRNAs when they are encoded in the rRNA operon. Processes pre-crRNA and tracrRNA of type II CRISPR loci if present in the organism. The sequence is that of Ribonuclease 3 from Geobacillus sp. (strain WCH70).